The primary structure comprises 136 residues: Large ribosomal subunit protein uL16 (136 aa).

The protein belongs to the universal ribosomal protein uL16 family. Part of the 50S ribosomal subunit.

Functionally, binds 23S rRNA and is also seen to make contacts with the A and possibly P site tRNAs. The sequence is that of Large ribosomal subunit protein uL16 from Buchnera aphidicola subsp. Cinara cedri (strain Cc).